The following is a 404-amino-acid chain: Zinc finger TRAF-type-containing protein 1 (404 aa).

Residues methionine 1–alanine 13 show a composition bias toward gly residues. The disordered stretch occupies residues methionine 1–alanine 22. The RING-type; degenerate zinc finger occupies cysteine 111–arginine 156. The TRAF-type zinc-finger motif lies at cysteine 152–threonine 225.

This sequence belongs to the ZFTRAF1 family. Interacts with LGALS3.

The protein localises to the cytoplasm. It localises to the perinuclear region. The polypeptide is Zinc finger TRAF-type-containing protein 1 (Homo sapiens (Human)).